The primary structure comprises 312 residues: CD-NTase-associated protein 12 (312 aa).

The 123-residue stretch at 5 to 127 (RLFIGSSSEE…FNGLTLARFD (123 aa)) folds into the TIR domain.

In the C-terminal section; belongs to the bacterial STING family. Forms homodimers; in the presence of c-di-GMP forms filaments with an ordered array of parallel-stacked subunits.

It carries out the reaction NAD(+) + H2O = ADP-D-ribose + nicotinamide + H(+). Its activity is regulated as follows. NAD(+) hydrolase activity is strongly stimulated by c-di-GMP, weakly by 3'3'-cGAMP, very weakly by c-di-AMP but not at all by 2'3'-cGAMP. Self-association of TIR domains is required for NADase activity. Its function is as follows. Effector protein of a CBASS antiviral system with NAD(+) hydrolase activity. CBASS (cyclic oligonucleotide-based antiphage signaling system) provides immunity against bacteriophage. The CD-NTase protein synthesizes cyclic nucleotides in response to infection; these serve as specific second messenger signals. The signals activate a diverse range of effectors, leading to bacterial cell death and thus abortive phage infection. A type I-D CBASS(GG) system. Functionally, binds c-di-GMP, does not bind cUMP-AMP. Upon activation by c-di-GMP forms filaments which hydrolyze NAD(+); filament formation is required for enzyme activation. The polypeptide is CD-NTase-associated protein 12 (Niabella drilacis (strain DSM 25811 / CCM 8410 / CCUG 62505 / LMG 26954 / E90)).